The primary structure comprises 348 residues: Holliday junction branch migration complex subunit RuvB (348 aa).

Residues 1-183 (MAPQPRRLIA…FGIPIRLEYY (183 aa)) form a large ATPase domain (RuvB-L) region. Residues Leu22, Arg23, Gly64, Lys67, Thr68, Thr69, 130 to 132 (EDF), Arg173, Tyr183, and Arg220 each bind ATP. Position 68 (Thr68) interacts with Mg(2+). Residues 184-254 (TVEELECIVR…VADRALRLLD (71 aa)) form a small ATPAse domain (RuvB-S) region. The head domain (RuvB-H) stretch occupies residues 257–348 (HIGLDQMDRR…FQLFSEGGEE (92 aa)). Arg293, Arg312, and Arg317 together coordinate DNA.

Belongs to the RuvB family. As to quaternary structure, homohexamer. Forms an RuvA(8)-RuvB(12)-Holliday junction (HJ) complex. HJ DNA is sandwiched between 2 RuvA tetramers; dsDNA enters through RuvA and exits via RuvB. An RuvB hexamer assembles on each DNA strand where it exits the tetramer. Each RuvB hexamer is contacted by two RuvA subunits (via domain III) on 2 adjacent RuvB subunits; this complex drives branch migration. In the full resolvosome a probable DNA-RuvA(4)-RuvB(12)-RuvC(2) complex forms which resolves the HJ.

The protein resides in the cytoplasm. The catalysed reaction is ATP + H2O = ADP + phosphate + H(+). Its function is as follows. The RuvA-RuvB-RuvC complex processes Holliday junction (HJ) DNA during genetic recombination and DNA repair, while the RuvA-RuvB complex plays an important role in the rescue of blocked DNA replication forks via replication fork reversal (RFR). RuvA specifically binds to HJ cruciform DNA, conferring on it an open structure. The RuvB hexamer acts as an ATP-dependent pump, pulling dsDNA into and through the RuvAB complex. RuvB forms 2 homohexamers on either side of HJ DNA bound by 1 or 2 RuvA tetramers; 4 subunits per hexamer contact DNA at a time. Coordinated motions by a converter formed by DNA-disengaged RuvB subunits stimulates ATP hydrolysis and nucleotide exchange. Immobilization of the converter enables RuvB to convert the ATP-contained energy into a lever motion, pulling 2 nucleotides of DNA out of the RuvA tetramer per ATP hydrolyzed, thus driving DNA branch migration. The RuvB motors rotate together with the DNA substrate, which together with the progressing nucleotide cycle form the mechanistic basis for DNA recombination by continuous HJ branch migration. Branch migration allows RuvC to scan DNA until it finds its consensus sequence, where it cleaves and resolves cruciform DNA. The polypeptide is Holliday junction branch migration complex subunit RuvB (Methylocella silvestris (strain DSM 15510 / CIP 108128 / LMG 27833 / NCIMB 13906 / BL2)).